The sequence spans 334 residues: Malate dehydrogenase, cytoplasmic (334 aa).

An NAD(+)-binding site is contributed by 11–17 (GAAGQIA). Substrate-binding residues include arginine 92 and arginine 98. NAD(+) contacts are provided by residues asparagine 105, glutamine 112, and 129–131 (VGN). Positions 131 and 162 each coordinate substrate. The active-site Proton acceptor is the histidine 187.

This sequence belongs to the LDH/MDH superfamily. MDH type 2 family. Homodimer.

The protein resides in the cytoplasm. The protein localises to the cytosol. The enzyme catalyses (S)-malate + NAD(+) = oxaloacetate + NADH + H(+). It catalyses the reaction (S)-2-hydroxyglutarate + NAD(+) = 2-oxoglutarate + NADH + H(+). Its function is as follows. Catalyzes the reduction of aromatic alpha-keto acids in the presence of NADH. Plays essential roles in the malate-aspartate shuttle and the tricarboxylic acid cycle, important in mitochondrial NADH supply for oxidative phosphorylation. Catalyzes the reduction of 2-oxoglutarate to 2-hydroxyglutarate, leading to elevated reactive oxygen species (ROS). This chain is Malate dehydrogenase, cytoplasmic (MDH1), found in Gallus gallus (Chicken).